The chain runs to 221 residues: Cytidylate kinase (221 aa).

11–19 (GPSGVGKST) provides a ligand contact to ATP.

This sequence belongs to the cytidylate kinase family. Type 1 subfamily.

It is found in the cytoplasm. The enzyme catalyses CMP + ATP = CDP + ADP. It carries out the reaction dCMP + ATP = dCDP + ADP. This chain is Cytidylate kinase, found in Mycoplasmopsis pulmonis (strain UAB CTIP) (Mycoplasma pulmonis).